Consider the following 357-residue polypeptide: Vomeronasal type-1 receptor 5 (357 aa).

Residues 1 to 3 (MLK) lie on the Extracellular side of the membrane. A helical membrane pass occupies residues 4–24 (LVIIENMAEIMLFSLDLLLFS). Residues 25–52 (TDILCFNFPSKMIKLPGFITIQIFFYPQ) lie on the Cytoplasmic side of the membrane. The helical transmembrane segment at 53-73 (ASFGISANTILLLFHIFTFVF) threads the bilayer. Over 74 to 81 (SHRSKSID) the chain is Extracellular. Residues 82-102 (MIISHLSLIHILLLFTQAILV) form a helical membrane-spanning segment. The Cytoplasmic portion of the chain corresponds to 103-130 (SLDFFGSQNTQDDLRYKVIVFLNKVMRG). A helical membrane pass occupies residues 131 to 151 (LSICTPCLLSVLQAIISPSIF). At 152–163 (SLAKLKHPSASH) the chain is on the extracellular side. Residues 164–184 (ILGFFLFSWVLNMFIGVIFCC) form a helical membrane-spanning segment. Over 185–269 (TLRLPPVKRG…RVSPVKRASQ (85 aa)) the chain is Cytoplasmic. The helical transmembrane segment at 270–290 (AILLLVSFVFTYWVDFTFSFS) threads the bilayer. The Extracellular segment spans residues 291-300 (GGVTWINDSL). The N-linked (GlcNAc...) asparagine glycan is linked to asparagine 297. Residues 301 to 321 (LVWLQVIVANSYAAISPLMLI) form a helical membrane-spanning segment. At 322 to 357 (YADNQIFKTLQMLWFKYLSPPKLMLKFNRQCGSTKK) the chain is on the cytoplasmic side.

This sequence belongs to the G-protein coupled receptor 1 family.

It is found in the cell membrane. In terms of biological role, putative pheromone receptor. In Homo sapiens (Human), this protein is Vomeronasal type-1 receptor 5 (VN1R5).